A 308-amino-acid chain; its full sequence is Low density lipoprotein receptor adapter protein 1 (308 aa).

An N-acetylmethionine modification is found at Met-1. Residue Ser-14 is modified to Phosphoserine. In terms of domain architecture, PID spans 41-195 (LLEGMVFSLK…QEGGDVPGTR (155 aa)). The interval 179–201 (EKREKANQEGGDVPGTRRDSTPS) is disordered. Phosphoserine occurs at positions 198 and 201. Residues 211 to 215 (LLDLE) carry the Clathrin box motif. Residues 248 to 275 (WELDDGLDEAFSRLAQSRTNPQVLDTGL) are AP-2 complex binding. The [DE]-X(1,2)-F-X-X-[FL]-X-X-X-R motif signature appears at 256 to 265 (EAFSRLAQSR). The interval 288–308 (PTDWDKPDSSGIDQDDDVFTF) is disordered.

In terms of assembly, interacts (via PID domain) with LDLR (via NPXY motif). Binds to soluble clathrin trimers. Interacts with AP2B1; the interaction mediates the association with the AP-2 complex. Interacts with VLDLR. Interacts with LRP2.

The protein resides in the cytoplasm. In terms of biological role, adapter protein (clathrin-associated sorting protein (CLASP)) required for efficient endocytosis of the LDL receptor (LDLR) in polarized cells such as hepatocytes and lymphocytes, but not in non-polarized cells (fibroblasts). May be required for LDL binding and internalization but not for receptor clustering in coated pits. May facilitate the endocytosis of LDLR and LDLR-LDL complexes from coated pits by stabilizing the interaction between the receptor and the structural components of the pits. May also be involved in the internalization of other LDLR family members. Binds to phosphoinositides, which regulate clathrin bud assembly at the cell surface. Required for trafficking of LRP2 to the endocytic recycling compartment which is necessary for LRP2 proteolysis, releasing a tail fragment which translocates to the nucleus and mediates transcriptional repression. In Mus musculus (Mouse), this protein is Low density lipoprotein receptor adapter protein 1.